We begin with the raw amino-acid sequence, 138 residues long: Protein PsiE homolog (138 aa).

Helical transmembrane passes span 12 to 34 (YLLQALLNVCLFFLALALSALLI), 56 to 76 (YEMLGELLIFFMYFEFIALII), 84 to 104 (HFPLRYFIYIGITAVIRLIII), and 109 to 129 (AISTFWWAMAILAMICGFFIA).

It belongs to the PsiE family.

It localises to the cell membrane. The sequence is that of Protein PsiE homolog from Bacillus subtilis (strain 168).